A 448-amino-acid chain; its full sequence is Chromosomal replication initiator protein DnaA 1 (448 aa).

The interval 1–76 is domain I, interacts with DnaA modulators; the sequence is MLTSETQNVW…FLPVDMSGEP (76 aa). The tract at residues 76–111 is domain II; sequence PAIRFIIAPPQKKIIPPNHFSISSSQKEEQSPNSDV. The interval 112–328 is domain III, AAA+ region; sequence KLNNNYRFEN…GAINRLSAHC (217 aa). Residues Gly-156, Gly-158, Lys-159, and Thr-160 each contribute to the ATP site. The interval 329 to 448 is domain IV, binds dsDNA; sequence RLLDLNITEE…IGMVRRNIES (120 aa).

It belongs to the DnaA family. Oligomerizes as a right-handed, spiral filament on DNA at oriC.

It localises to the cytoplasm. Functionally, plays an essential role in the initiation and regulation of chromosomal replication. ATP-DnaA binds to the origin of replication (oriC) to initiate formation of the DNA replication initiation complex once per cell cycle. Binds the DnaA box (a 9 base pair repeat at the origin) and separates the double-stranded (ds)DNA. Forms a right-handed helical filament on oriC DNA; dsDNA binds to the exterior of the filament while single-stranded (ss)DNA is stabiized in the filament's interior. The ATP-DnaA-oriC complex binds and stabilizes one strand of the AT-rich DNA unwinding element (DUE), permitting loading of DNA polymerase. After initiation quickly degrades to an ADP-DnaA complex that is not apt for DNA replication. Binds acidic phospholipids. This Protochlamydia amoebophila (strain UWE25) protein is Chromosomal replication initiator protein DnaA 1.